Reading from the N-terminus, the 334-residue chain is Protein-methionine-sulfoxide reductase catalytic subunit MsrP (334 aa).

Residues 1–44 (MKAVNPLTENDVTPESLFNARRRTVLKMLGMSAAALSLPGAARA) constitute a signal peptide (tat-type signal). Residues Asn88, 91–92 (YE), Cys146, Thr181, Asn233, Arg238, and 249–251 (GIK) contribute to the Mo-molybdopterin site.

This sequence belongs to the MsrP family. As to quaternary structure, heterodimer of a catalytic subunit (MsrP) and a heme-binding subunit (MsrQ). Mo-molybdopterin is required as a cofactor. Predicted to be exported by the Tat system. The position of the signal peptide cleavage has not been experimentally proven.

The protein resides in the periplasm. The catalysed reaction is L-methionyl-[protein] + a quinone + H2O = L-methionyl-(S)-S-oxide-[protein] + a quinol. The enzyme catalyses L-methionyl-[protein] + a quinone + H2O = L-methionyl-(R)-S-oxide-[protein] + a quinol. Part of the MsrPQ system that repairs oxidized periplasmic proteins containing methionine sulfoxide residues (Met-O), using respiratory chain electrons. Thus protects these proteins from oxidative-stress damage caused by reactive species of oxygen and chlorine generated by the host defense mechanisms. MsrPQ is essential for the maintenance of envelope integrity under bleach stress, rescuing a wide series of structurally unrelated periplasmic proteins from methionine oxidation. The catalytic subunit MsrP is non-stereospecific, being able to reduce both (R-) and (S-) diastereoisomers of methionine sulfoxide. The chain is Protein-methionine-sulfoxide reductase catalytic subunit MsrP from Erwinia tasmaniensis (strain DSM 17950 / CFBP 7177 / CIP 109463 / NCPPB 4357 / Et1/99).